The chain runs to 318 residues: Transaldolase (318 aa).

Catalysis depends on K132, which acts as the Schiff-base intermediate with substrate.

This sequence belongs to the transaldolase family. Type 1 subfamily. In terms of assembly, homodimer.

The protein localises to the cytoplasm. The catalysed reaction is D-sedoheptulose 7-phosphate + D-glyceraldehyde 3-phosphate = D-erythrose 4-phosphate + beta-D-fructose 6-phosphate. The protein operates within carbohydrate degradation; pentose phosphate pathway; D-glyceraldehyde 3-phosphate and beta-D-fructose 6-phosphate from D-ribose 5-phosphate and D-xylulose 5-phosphate (non-oxidative stage): step 2/3. Its function is as follows. Transaldolase is important for the balance of metabolites in the pentose-phosphate pathway. This Shewanella oneidensis (strain ATCC 700550 / JCM 31522 / CIP 106686 / LMG 19005 / NCIMB 14063 / MR-1) protein is Transaldolase.